Here is a 293-residue protein sequence, read N- to C-terminus: 33 kDa chaperonin (293 aa).

2 disulfide bridges follow: C239/C241 and C272/C275.

It belongs to the HSP33 family. Under oxidizing conditions two disulfide bonds are formed involving the reactive cysteines. Under reducing conditions zinc is bound to the reactive cysteines and the protein is inactive.

The protein localises to the cytoplasm. Its function is as follows. Redox regulated molecular chaperone. Protects both thermally unfolding and oxidatively damaged proteins from irreversible aggregation. Plays an important role in the bacterial defense system toward oxidative stress. In Limosilactobacillus fermentum (strain NBRC 3956 / LMG 18251) (Lactobacillus fermentum), this protein is 33 kDa chaperonin.